The following is a 377-amino-acid chain: uncharacterized protein (377 aa).

32–39 serves as a coordination point for ATP; the sequence is GPINSGKT.

It belongs to the archaeal ATPase family.

This is an uncharacterized protein from Methanocaldococcus jannaschii (strain ATCC 43067 / DSM 2661 / JAL-1 / JCM 10045 / NBRC 100440) (Methanococcus jannaschii).